Consider the following 617-residue polypeptide: Dihydroxy-acid dehydratase (617 aa).

Asp-81 provides a ligand contact to Mg(2+). A [2Fe-2S] cluster-binding site is contributed by Cys-122. 2 residues coordinate Mg(2+): Asp-123 and Lys-124. The residue at position 124 (Lys-124) is an N6-carboxylysine. Residue Cys-195 participates in [2Fe-2S] cluster binding. Glu-491 serves as a coordination point for Mg(2+). Ser-517 acts as the Proton acceptor in catalysis.

This sequence belongs to the IlvD/Edd family. In terms of assembly, homodimer. The cofactor is [2Fe-2S] cluster. Mg(2+) is required as a cofactor.

It catalyses the reaction (2R)-2,3-dihydroxy-3-methylbutanoate = 3-methyl-2-oxobutanoate + H2O. It carries out the reaction (2R,3R)-2,3-dihydroxy-3-methylpentanoate = (S)-3-methyl-2-oxopentanoate + H2O. The protein operates within amino-acid biosynthesis; L-isoleucine biosynthesis; L-isoleucine from 2-oxobutanoate: step 3/4. It participates in amino-acid biosynthesis; L-valine biosynthesis; L-valine from pyruvate: step 3/4. In terms of biological role, functions in the biosynthesis of branched-chain amino acids. Catalyzes the dehydration of (2R,3R)-2,3-dihydroxy-3-methylpentanoate (2,3-dihydroxy-3-methylvalerate) into 2-oxo-3-methylpentanoate (2-oxo-3-methylvalerate) and of (2R)-2,3-dihydroxy-3-methylbutanoate (2,3-dihydroxyisovalerate) into 2-oxo-3-methylbutanoate (2-oxoisovalerate), the penultimate precursor to L-isoleucine and L-valine, respectively. This is Dihydroxy-acid dehydratase from Caulobacter vibrioides (strain ATCC 19089 / CIP 103742 / CB 15) (Caulobacter crescentus).